Reading from the N-terminus, the 398-residue chain is Nematocin receptor 2 (398 aa).

The Extracellular segment spans residues M1 to V25. 2 N-linked (GlcNAc...) asparagine glycosylation sites follow: N3 and N7. Residues Y26–F46 form a helical membrane-spanning segment. Topologically, residues R47–P58 are cytoplasmic. The chain crosses the membrane as a helical span at residues V59–G79. At T80–K99 the chain is on the extracellular side. A disulfide bridge connects residues C98 and C173. Residues L100–S120 traverse the membrane as a helical segment. Topologically, residues A121–N143 are cytoplasmic. The helical transmembrane segment at W144–W164 threads the bilayer. Residues T165 to T187 are Extracellular-facing. A helical membrane pass occupies residues Y188–Y208. Residues Y209–L271 lie on the Cytoplasmic side of the membrane. The helical transmembrane segment at T272 to I292 threads the bilayer. The Extracellular segment spans residues Q293–I302. Residues M303–L325 traverse the membrane as a helical segment. Topologically, residues F326–N398 are cytoplasmic.

This sequence belongs to the G-protein coupled receptor 1 family. Vasopressin/oxytocin receptor subfamily. In terms of tissue distribution, detected in the ADL sensory neurons, the RMED and RMEV motor neurons, and the PQR tail neuron. In males, detected in SPC tail neurons involved in spicule penetration and sperm transfer, and male-specific oblique muscles involved in vulval contact.

It is found in the cell membrane. Not directly activated by nematocin. May modulate activity of the nematocin receptor ntr-1, leading to reduced intracellular cAMP production. Plays a role in male mating behavior. The polypeptide is Nematocin receptor 2 (Caenorhabditis elegans).